A 432-amino-acid polypeptide reads, in one-letter code: CLOCK-interacting pacemaker (432 aa).

Disordered stretches follow at residues 71–98 (ADSD…SEDM) and 194–315 (SYTK…SSPL). Serine 246 carries the phosphoserine modification. Residues 272–283 (SPQTLQPVSSSH) are compositionally biased toward polar residues. Positions 364–395 (EITLKTKELIRQNQATQAELDQLKEQTQMFIE) form a coiled coil. The interval 408–432 (LQASLTSGSSHSGSDLDTLSDHPDV) is disordered. Low complexity predominate over residues 411–424 (SLTSGSSHSGSDLD).

In terms of assembly, interacts with CLOCK. Forms a ternary complex with the CLOCK-BMAL1 heterodimer. Interacts with CAD and HSPA5. As to expression, expressed in the heart, kidney and liver and shows a circadian oscillation in these tissues with a peak at circadian time 14 hours (at protein level). Expressed in the brain, including the suprachiasmatic nucleus (SCN) of the brain, and in multiple peripheral tissues such as heart, liver and kidney. Exhibits a circadian oscillation in the peripheral tissues with a peak at circadian time 14 hours.

Its subcellular location is the nucleus. The protein localises to the cytoplasm. The protein resides in the cytosol. In terms of biological role, transcriptional repressor which may act as a negative-feedback regulator of CLOCK-BMAL1 transcriptional activity in the circadian-clock mechanism. May stimulate BMAL1-dependent phosphorylation of CLOCK. However, the physiological relevance of these observations is unsure, since experiments in knockout mice showed that CIPC is not critially required for basic circadian clock. This is CLOCK-interacting pacemaker (Cipc) from Mus musculus (Mouse).